We begin with the raw amino-acid sequence, 197 residues long: Adenylyl-sulfate kinase (197 aa).

31–38 contacts ATP; that stretch reads GLSGAGKS. Ser-105 functions as the Phosphoserine intermediate in the catalytic mechanism.

This sequence belongs to the APS kinase family.

It carries out the reaction adenosine 5'-phosphosulfate + ATP = 3'-phosphoadenylyl sulfate + ADP + H(+). The protein operates within sulfur metabolism; hydrogen sulfide biosynthesis; sulfite from sulfate: step 2/3. Catalyzes the synthesis of activated sulfate. The chain is Adenylyl-sulfate kinase from Aeromonas hydrophila subsp. hydrophila (strain ATCC 7966 / DSM 30187 / BCRC 13018 / CCUG 14551 / JCM 1027 / KCTC 2358 / NCIMB 9240 / NCTC 8049).